The primary structure comprises 262 residues: Sulfur carrier protein FdhD (262 aa).

Cys-107 functions as the Cysteine persulfide intermediate in the catalytic mechanism.

The protein belongs to the FdhD family.

It is found in the cytoplasm. In terms of biological role, required for formate dehydrogenase (FDH) activity. Acts as a sulfur carrier protein that transfers sulfur from IscS to the molybdenum cofactor prior to its insertion into FDH. The sequence is that of Sulfur carrier protein FdhD from Bacillus subtilis (strain 168).